A 250-amino-acid chain; its full sequence is Anti-Pycsar protein Apyc1 (250 aa).

The segment at 19-220 is beta-lactamase-like; sequence YNNNALVKCN…AVQEMIMLMH (202 aa). Residues histidine 61, histidine 63, aspartate 65, histidine 66, histidine 146, aspartate 166, and histidine 220 each coordinate Zn(2+).

This sequence belongs to the anti-Pycsar protein Apyc1 family. As to quaternary structure, homodimer. Zn(2+) is required as a cofactor.

The catalysed reaction is 3',5'-cyclic CMP + H2O = CMP + H(+). It catalyses the reaction 3',5'-cyclic UMP + H2O = UMP + H(+). In terms of biological role, counteracts the endogenous Pycsar antiviral defense system. Phosphodiesterase that enables metal-dependent hydrolysis of host cyclic nucleotide Pycsar defense signals such as cCMP and cUMP. In Paenibacillus xerothermodurans, this protein is Anti-Pycsar protein Apyc1.